Consider the following 190-residue polypeptide: Threonylcarbamoyl-AMP synthase (190 aa).

The 184-residue stretch at 7-190 folds into the YrdC-like domain; that stretch reads GDAIAAAIDV…ALTGELFRQG (184 aa).

It belongs to the SUA5 family. TsaC subfamily.

The protein localises to the cytoplasm. It carries out the reaction L-threonine + hydrogencarbonate + ATP = L-threonylcarbamoyladenylate + diphosphate + H2O. Functionally, required for the formation of a threonylcarbamoyl group on adenosine at position 37 (t(6)A37) in tRNAs that read codons beginning with adenine. Catalyzes the conversion of L-threonine, HCO(3)(-)/CO(2) and ATP to give threonylcarbamoyl-AMP (TC-AMP) as the acyladenylate intermediate, with the release of diphosphate. The chain is Threonylcarbamoyl-AMP synthase from Escherichia coli O157:H7.